The sequence spans 655 residues: Large subunit GTPase 1 homolog (655 aa).

A disordered region spans residues 1 to 31 (MGRRRAPGGGSLGRVLIRHQTQRSRSHRHTD). Over residues 16 to 28 (LIRHQTQRSRSHR) the composition is skewed to basic residues. A phosphoserine mark is found at Ser93 and Ser97. Residues 164-441 (WRQLWRVIER…LCDCPGLVMP (278 aa)) form the CP-type G domain. A GTP-binding site is contributed by 212 to 215 (NKAD). Ser252 is modified (phosphoserine). Residues 253 to 359 (KDEVNSVAGE…ENSQMSNKSH (107 aa)) are disordered. Positions 288–327 (EESESDDDDSEYEDCQEDEEEDWQTCSEEDSNPEEGQEEG) are enriched in acidic residues. The segment covering 328–339 (GCDRDQKEHGPE) has biased composition (basic and acidic residues). The span at 344-359 (QSRASPENSQMSNKSH) shows a compositional bias: polar residues. Residues 390-397 (GYPNVGKS) and 434-437 (DCPG) contribute to the GTP site. Residues 625-655 (SAENVPGKPWKKHGNRNKKEKSRRLYRHLDV) are disordered. The segment covering 633–655 (PWKKHGNRNKKEKSRRLYRHLDV) has biased composition (basic residues).

Belongs to the TRAFAC class YlqF/YawG GTPase family. LSG1 subfamily.

The protein resides in the cytoplasm. It is found in the endoplasmic reticulum. It localises to the nucleus. The protein localises to the cajal body. The enzyme catalyses GTP + H2O = GDP + phosphate + H(+). Its function is as follows. Functions as a GTPase. May act by mediating the release of NMD3 from the 60S ribosomal subunit after export into the cytoplasm during the 60S ribosomal subunit maturation. In Rattus norvegicus (Rat), this protein is Large subunit GTPase 1 homolog.